A 303-amino-acid polypeptide reads, in one-letter code: Imidazoleglycerol-phosphate dehydratase (303 aa).

It belongs to the imidazoleglycerol-phosphate dehydratase family.

The protein resides in the cytoplasm. The enzyme catalyses D-erythro-1-(imidazol-4-yl)glycerol 3-phosphate = 3-(imidazol-4-yl)-2-oxopropyl phosphate + H2O. The protein operates within amino-acid biosynthesis; L-histidine biosynthesis; L-histidine from 5-phospho-alpha-D-ribose 1-diphosphate: step 6/9. This Neisseria gonorrhoeae (strain ATCC 700825 / FA 1090) protein is Imidazoleglycerol-phosphate dehydratase.